The following is a 244-amino-acid chain: Na(+)-translocating NADH-quinone reductase subunit E (244 aa).

Helical transmembrane passes span 11 to 31, 50 to 70, 90 to 110, 123 to 143, 153 to 173, and 191 to 211; these read LLGIFLQATFIQNILLSTFLG, MSVALVLTITGSINWLVHYFI, FLELIMFIVVIAAFTQILEVL, GIFLPLIAVNCAILGGVLFGI, VVFSLGSGCGWWLAIVLFATI, and ISFITTGLMAMAFMGLTGIDI. The segment covering 222 to 236 has biased composition (polar residues); the sequence is VTNIATDSPQPNTHS. Positions 222 to 244 are disordered; the sequence is VTNIATDSPQPNTHSSSEEPKAS.

This sequence belongs to the NqrDE/RnfAE family. Composed of six subunits; NqrA, NqrB, NqrC, NqrD, NqrE and NqrF.

It localises to the cell inner membrane. The enzyme catalyses a ubiquinone + n Na(+)(in) + NADH + H(+) = a ubiquinol + n Na(+)(out) + NAD(+). NQR complex catalyzes the reduction of ubiquinone-1 to ubiquinol by two successive reactions, coupled with the transport of Na(+) ions from the cytoplasm to the periplasm. NqrA to NqrE are probably involved in the second step, the conversion of ubisemiquinone to ubiquinol. In Chlamydia trachomatis serovar A (strain ATCC VR-571B / DSM 19440 / HAR-13), this protein is Na(+)-translocating NADH-quinone reductase subunit E.